A 238-amino-acid chain; its full sequence is 2-phytyl-1,4-naphtoquinone methyltransferase (238 aa).

This sequence belongs to the class I-like SAM-binding methyltransferase superfamily. MenG/UbiE family.

The catalysed reaction is demethylphylloquinol + S-adenosyl-L-methionine = phylloquinol + S-adenosyl-L-homocysteine + H(+). It functions in the pathway cofactor biosynthesis; phylloquinone biosynthesis. Methyltransferase required for the conversion of 2-phytyl-1,4-beta-naphthoquinol to phylloquinol. The sequence is that of 2-phytyl-1,4-naphtoquinone methyltransferase from Synechocystis sp. (strain ATCC 27184 / PCC 6803 / Kazusa).